Consider the following 690-residue polypeptide: Elongation factor G (690 aa).

The 275-residue stretch at 8–282 (KMTRNIGIMA…AVIDYLPSPL (275 aa)) folds into the tr-type G domain. Residues 17 to 24 (AHIDAGKT), 81 to 85 (DTPGH), and 135 to 138 (NKMD) contribute to the GTP site.

This sequence belongs to the TRAFAC class translation factor GTPase superfamily. Classic translation factor GTPase family. EF-G/EF-2 subfamily.

Its subcellular location is the cytoplasm. Catalyzes the GTP-dependent ribosomal translocation step during translation elongation. During this step, the ribosome changes from the pre-translocational (PRE) to the post-translocational (POST) state as the newly formed A-site-bound peptidyl-tRNA and P-site-bound deacylated tRNA move to the P and E sites, respectively. Catalyzes the coordinated movement of the two tRNA molecules, the mRNA and conformational changes in the ribosome. The sequence is that of Elongation factor G from Acholeplasma laidlawii (strain PG-8A).